The sequence spans 675 residues: Parasporal crystal protein Cry18Ba (675 aa).

The protein belongs to the delta endotoxin family.

Functionally, binds to the brush border membrane vesicles of scarab larvae and damages the gut wall somehow to allow the vegetative cells of P.popilliae to enter the hemolymph. In Paenibacillus popilliae (Bacillus popilliae), this protein is Parasporal crystal protein Cry18Ba (cry18Ba).